Reading from the N-terminus, the 558-residue chain is Alpha-1,3-mannosyltransferase MNT2 (558 aa).

The Cytoplasmic portion of the chain corresponds to 1–6 (MRRKNR). The chain crosses the membrane as a helical; Signal-anchor for type II membrane protein span at residues 7-27 (LFILVVLLGIVLVVYYSQLNS). Residues 28–558 (LDLVEPVQSS…QIVDIWNKDI (531 aa)) are Lumenal-facing. A glycan (N-linked (GlcNAc...) asparagine) is linked at Asn-187.

The protein belongs to the MNN1/MNT family.

It is found in the golgi apparatus membrane. It participates in protein modification; protein glycosylation. Functionally, mannosyltransferase involved in adding the 4th and 5th mannose residues of O-linked glycans. The polypeptide is Alpha-1,3-mannosyltransferase MNT2 (MNT2) (Saccharomyces cerevisiae (strain ATCC 204508 / S288c) (Baker's yeast)).